The sequence spans 280 residues: MSSQADARRITAPQIQARKGGEPIVSLTSYHSHTARLLDRHVDVILVGDSLGMVMHGMETTVPVTVEMMIVHGRAVVRGTKRALIVVDLPFGSYEASHTEAFHTAARVLKETGAGAVKLEGGRRMAETVRFLVDRGVPVMGHVGLTPQAINTLGSFKARGRDDAEASIILDDARAIAEAGAFSIVLEAIAEPLARRITQEVAPPTIGIGGSPACDGQILVLEDMLGLGDRVPKFVKKYANLGPDIEKAVASYADEVRARTFPAAEHTYAPRLVEKPAKAS.

Residues Asp49 and Asp88 each contribute to the Mg(2+) site. Residues Asp49–Ser50, Asp88, and Lys118 each bind 3-methyl-2-oxobutanoate. Glu120 contacts Mg(2+). The active-site Proton acceptor is Glu187.

This sequence belongs to the PanB family. As to quaternary structure, homodecamer; pentamer of dimers. The cofactor is Mg(2+).

The protein resides in the cytoplasm. The catalysed reaction is 3-methyl-2-oxobutanoate + (6R)-5,10-methylene-5,6,7,8-tetrahydrofolate + H2O = 2-dehydropantoate + (6S)-5,6,7,8-tetrahydrofolate. It participates in cofactor biosynthesis; (R)-pantothenate biosynthesis; (R)-pantoate from 3-methyl-2-oxobutanoate: step 1/2. Catalyzes the reversible reaction in which hydroxymethyl group from 5,10-methylenetetrahydrofolate is transferred onto alpha-ketoisovalerate to form ketopantoate. The polypeptide is 3-methyl-2-oxobutanoate hydroxymethyltransferase (Xanthobacter autotrophicus (strain ATCC BAA-1158 / Py2)).